We begin with the raw amino-acid sequence, 377 residues long: Chaperone protein DnaJ (377 aa).

Residues 5-70 (DYYEILGVSK…QKRAAYDQYG (66 aa)) form the J domain. The CR-type zinc-finger motif lies at 132–210 (GVTKEIRIPT…CHGHGRVEKT (79 aa)). Positions 145, 148, 162, 165, 184, 187, 198, and 201 each coordinate Zn(2+). CXXCXGXG motif repeat units lie at residues 145–152 (CDVCHGSG), 162–169 (CPTCHGAG), 184–191 (CPHCQGRG), and 198–205 (CNKCHGHG).

It belongs to the DnaJ family. As to quaternary structure, homodimer. Zn(2+) is required as a cofactor.

It is found in the cytoplasm. Participates actively in the response to hyperosmotic and heat shock by preventing the aggregation of stress-denatured proteins and by disaggregating proteins, also in an autonomous, DnaK-independent fashion. Unfolded proteins bind initially to DnaJ; upon interaction with the DnaJ-bound protein, DnaK hydrolyzes its bound ATP, resulting in the formation of a stable complex. GrpE releases ADP from DnaK; ATP binding to DnaK triggers the release of the substrate protein, thus completing the reaction cycle. Several rounds of ATP-dependent interactions between DnaJ, DnaK and GrpE are required for fully efficient folding. Also involved, together with DnaK and GrpE, in the DNA replication of plasmids through activation of initiation proteins. The sequence is that of Chaperone protein DnaJ from Klebsiella pneumoniae subsp. pneumoniae (strain ATCC 700721 / MGH 78578).